Reading from the N-terminus, the 735-residue chain is Probable E3 ubiquitin-protein ligase MID2 (735 aa).

Residues Cys30–Arg80 form an RING-type zinc finger. The B box-type 1; degenerate zinc finger occupies Ile137–Pro184. Residues Leu190–Leu232 form a B box-type 2 zinc finger. Positions 195, 198, 218, and 224 each coordinate Zn(2+). Residues Asn233 to Ala301 adopt a coiled-coil conformation. The 60-residue stretch at Leu340–Leu399 folds into the COS domain. The region spanning Tyr398–Thr531 is the Fibronectin type-III domain. The region spanning Ile516–Phe709 is the B30.2/SPRY domain.

It belongs to the TRIM/RBCC family. As to quaternary structure, homodimer or heterodimer with MID1. Interacts with IGBP1. Phosphorylated on serine and threonine residues. As to expression, low level in fetal kidney and lung, and in adult prostate, ovary and small intestine.

Its subcellular location is the cytoplasm. It localises to the cytoskeleton. It carries out the reaction S-ubiquitinyl-[E2 ubiquitin-conjugating enzyme]-L-cysteine + [acceptor protein]-L-lysine = [E2 ubiquitin-conjugating enzyme]-L-cysteine + N(6)-ubiquitinyl-[acceptor protein]-L-lysine.. Its pathway is protein modification; protein ubiquitination. Its function is as follows. E3 ubiquitin ligase that plays a role in microtubule stabilization. Mediates the 'Lys-48'-linked polyubiquitination of LRRK2 to drive its localization to microtubules and its proteasomal degradation in neurons. This ubiquitination inhibits LRRK2 kinase activation by RAB29. This Homo sapiens (Human) protein is Probable E3 ubiquitin-protein ligase MID2 (MID2).